The sequence spans 629 residues: Probable indole-3-acetic acid-amido synthetase GH3.4 (629 aa).

This sequence belongs to the IAA-amido conjugating enzyme family. As to expression, expressed in flowers.

Its function is as follows. May catalyze the synthesis of indole-3-acetic acid (IAA)-amino acid conjugates, providing a mechanism for the plant to cope with the presence of excess auxin. The protein is Probable indole-3-acetic acid-amido synthetase GH3.4 (GH3.4) of Oryza sativa subsp. japonica (Rice).